Reading from the N-terminus, the 214-residue chain is Probable chemoreceptor glutamine deamidase CheD (214 aa).

This sequence belongs to the CheD family.

The catalysed reaction is L-glutaminyl-[protein] + H2O = L-glutamyl-[protein] + NH4(+). In terms of biological role, probably deamidates glutamine residues to glutamate on methyl-accepting chemotaxis receptors (MCPs), playing an important role in chemotaxis. In Vibrio vulnificus (strain YJ016), this protein is Probable chemoreceptor glutamine deamidase CheD.